Reading from the N-terminus, the 69-residue chain is Putative membrane protein insertion efficiency factor (69 aa).

The protein belongs to the UPF0161 family.

The protein resides in the cell membrane. In terms of biological role, could be involved in insertion of integral membrane proteins into the membrane. The polypeptide is Putative membrane protein insertion efficiency factor (Thermomicrobium roseum (strain ATCC 27502 / DSM 5159 / P-2)).